The following is a 257-amino-acid chain: Type 2 phosphatidylinositol 4,5-bisphosphate 4-phosphatase (257 aa).

Residues 1 to 10 show a composition bias toward basic and acidic residues; it reads MAADGVDERS. The segment at 1–34 is disordered; the sequence is MAADGVDERSPLLSASHSGSVTPTAPPYLQDSSP. Residues 13 to 23 show a composition bias toward polar residues; sequence LSASHSGSVTP. Thr-22 bears the Phosphothreonine mark. Ser-33 is subject to Phosphoserine. Cys-107 is a catalytic residue. Residues 107–113 carry the CX5R motif motif; it reads CKDTSRR. Transmembrane regions (helical) follow at residues 192-212 and 227-247; these read CCAY…LTVG and WAIA…WGAI.

Its subcellular location is the late endosome membrane. The protein resides in the lysosome membrane. The protein localises to the cytoplasmic vesicle. It localises to the phagosome membrane. It is found in the cell membrane. It catalyses the reaction a 1,2-diacyl-sn-glycero-3-phospho-(1D-myo-inositol-4,5-bisphosphate) + H2O = a 1,2-diacyl-sn-glycero-3-phospho-(1D-myo-inositol-5-phosphate) + phosphate. Its function is as follows. Catalyzes the hydrolysis of phosphatidylinositol-4,5-bisphosphate (PtdIns-4,5-P2) to phosphatidylinositol-4-phosphate (PtdIns-4-P). Does not hydrolyze phosphatidylinositol 3,4,5-trisphosphate, phosphatidylinositol 3,4-bisphosphate, inositol 3,5-bisphosphate, inositol 3,4-bisphosphate, phosphatidylinositol 5-monophosphate, phosphatidylinositol 4-monophosphate and phosphatidylinositol 3-monophosphate. Negatively regulates the phagocytosis of large particles by reducing phagosomal phosphatidylinositol 4,5-bisphosphate accumulation during cup formation. In Bos taurus (Bovine), this protein is Type 2 phosphatidylinositol 4,5-bisphosphate 4-phosphatase.